A 526-amino-acid chain; its full sequence is MKYIFVTGGVMSGLGKGITAASVGRILKNRGYRVTAVKIDPYLNIDAGTMNPAQHGEVFVLKDGGEVDLDLGNYERFLDIELTSSHNITTGKVYRTVIEKERRGDFLGETVQIIPHITDQIKTCIRQAAEETFPDGTKADVCLVEVGGTVGDIESMPFLEAVRQMRGELDEHDYVLVHVTLVPEDAMGDLKTKPTQHSVKALRELGLHADIIVCRSERVVGANTKRKISAFCDLPLSAVISAATARDTYEVPMEMEKEGIADVLSTHLGLEKKETDPSWYRLVTKEYTNRVTVAIVSKYGIEDVYISIKEALKHAGRALSTEVKIVWLDAERYEPCSLKDYDGILIPGGFGKRGIEGKIGAIRFARENKVPFLGLCLGFQLATIEFARHKCGIADATSEEFGEGSHVIALLPEQESVTELGGTMRLGDYTSDIRDKTLAMKLYGKSQIIERHRHRYEVNPHYIEKLEKEGLVFSATNKNRMECLELPGHPFFFATQFHPEFKSRPTRPSPPYLGFVEACRANKRTT.

The segment at 1–270 (MKYIFVTGGV…ADVLSTHLGL (270 aa)) is amidoligase domain. Ser12 is a binding site for CTP. Ser12 is a binding site for UTP. ATP contacts are provided by residues 13–18 (GLGKGI) and Asp70. Mg(2+) contacts are provided by Asp70 and Glu145. CTP is bound by residues 152 to 154 (DIE), 191 to 196 (KTKPTQ), and Lys227. UTP is bound by residues 191–196 (KTKPTQ) and Lys227. In terms of domain architecture, Glutamine amidotransferase type-1 spans 293-525 (VAIVSKYGIE…VEACRANKRT (233 aa)). Position 349 (Gly349) interacts with L-glutamine. Cys376 functions as the Nucleophile; for glutamine hydrolysis in the catalytic mechanism. L-glutamine-binding positions include 377–380 (LGFQ), Glu400, and Arg455. Active-site residues include His498 and Glu500.

Belongs to the CTP synthase family. In terms of assembly, homotetramer.

The enzyme catalyses UTP + L-glutamine + ATP + H2O = CTP + L-glutamate + ADP + phosphate + 2 H(+). The catalysed reaction is L-glutamine + H2O = L-glutamate + NH4(+). It carries out the reaction UTP + NH4(+) + ATP = CTP + ADP + phosphate + 2 H(+). It participates in pyrimidine metabolism; CTP biosynthesis via de novo pathway; CTP from UDP: step 2/2. With respect to regulation, allosterically activated by GTP, when glutamine is the substrate; GTP has no effect on the reaction when ammonia is the substrate. The allosteric effector GTP functions by stabilizing the protein conformation that binds the tetrahedral intermediate(s) formed during glutamine hydrolysis. Inhibited by the product CTP, via allosteric rather than competitive inhibition. Functionally, catalyzes the ATP-dependent amination of UTP to CTP with either L-glutamine or ammonia as the source of nitrogen. Regulates intracellular CTP levels through interactions with the four ribonucleotide triphosphates. The chain is CTP synthase from Methanoregula boonei (strain DSM 21154 / JCM 14090 / 6A8).